A 468-amino-acid polypeptide reads, in one-letter code: POC1 centriolar protein homolog B (468 aa).

WD repeat units follow at residues 16–55, 58–97, 100–139, 142–181, 184–223, 226–265, and 268–307; these read GHKDAVTCVDFSPDSKQLASSSADACVMIWNFKPQSRAYK, GHKEAVTCVQFSPSGHLVASSSKDRTVRLWAPNIKGESTV, AHTAVVRCVNFSSDGQTFITASDDKSIKAWNLHRQRFLFS, QHTNWVRCARFSPDGRLIASCSDDKTVRIWDLTNRLCINT, DYKGHSNYVDFNQMGTCVASAGADSTVKVWDIRMNKLLQH, VHNAGVSSLSFHPSGNYLLTASSDGTLKILDLLEGRLIYT, and GHQGPVLSVTFSKSGDQFASGATDAQVLVWKTNFDKYSVK. The stretch at 420 to 459 forms a coiled coil; it reads NTLEQIVDQLNVLTQTVSILEHRLTLTEDKLKECLENQQK.

It belongs to the WD repeat POC1 family. As to quaternary structure, interacts with pat. As to expression, highly expressed in ovary and, at low levels, in testis.

Its subcellular location is the cytoplasm. It localises to the cytoskeleton. The protein localises to the microtubule organizing center. It is found in the centrosome. The protein resides in the centriole. Functionally, plays an important role in centriole assembly and/or stability and ciliogenesis. Involved in early steps of centriole duplication, as well as in the later steps of centriole length control. This Xenopus laevis (African clawed frog) protein is POC1 centriolar protein homolog B (poc1b).